The sequence spans 269 residues: Shikimate dehydrogenase (NADP(+)) (269 aa).

Residues 17 to 19 (SKS) and T64 contribute to the shikimate site. The active-site Proton acceptor is K68. Position 80 (E80) interacts with NADP(+). Shikimate-binding residues include N89 and D105. NADP(+)-binding positions include 130-134 (GAGGA), 154-159 (NRTHTK), and M213. Y215 serves as a coordination point for shikimate. An NADP(+)-binding site is contributed by G237.

The protein belongs to the shikimate dehydrogenase family. Homodimer.

It carries out the reaction shikimate + NADP(+) = 3-dehydroshikimate + NADPH + H(+). It participates in metabolic intermediate biosynthesis; chorismate biosynthesis; chorismate from D-erythrose 4-phosphate and phosphoenolpyruvate: step 4/7. Its function is as follows. Involved in the biosynthesis of the chorismate, which leads to the biosynthesis of aromatic amino acids. Catalyzes the reversible NADPH linked reduction of 3-dehydroshikimate (DHSA) to yield shikimate (SA). The polypeptide is Shikimate dehydrogenase (NADP(+)) (Neisseria mucosa).